The primary structure comprises 414 residues: Protein SOSEKI 2 (414 aa).

Residues 44-135 (RRVQVVYYLT…YVLKGSEITD (92 aa)) form a DIX-like oligomerization domain region. A disordered region spans residues 171–273 (SFDDAELYVG…GDPVEPGSGR (103 aa)). Over residues 173–192 (DDAELYVGEEEEEEDGEYEL) the composition is skewed to acidic residues. Positions 205 to 229 (PQSRCSRGVSTETMESTEQKPNLTK) are enriched in polar residues. Basic and acidic residues predominate over residues 230–242 (TEQDLQVRSDSSD). An Association to cell membranes motif is present at residues 283-284 (CG).

This sequence belongs to the SOSEKI family. In terms of assembly, homodimer. Forms long polymer filaments with other SOKs proteins polymers (e.g. SOK1, SOK2, SOK3 and SOK4) crucial for polar localization and biological activity. Binds to ANGUSTIFOLIA (AN). In terms of tissue distribution, expressed during embryogenesis and in roots.

The protein localises to the cell membrane. Its function is as follows. Part of a three-gene cluster containing FLC, UFC and DFC, which is coordinately regulated in response to vernalization. Also regulated by FLX. SOSEKI proteins (SOK1-5) locally interpret global polarity cues and can influence cell division orientation to coordinate cell polarization relative to body axes, probably by guiding ANGUSTIFOLIA (AN) polarized localization. The protein is Protein SOSEKI 2 of Arabidopsis thaliana (Mouse-ear cress).